We begin with the raw amino-acid sequence, 233 residues long: Auxin-responsive protein IAA11 (233 aa).

2 disordered regions span residues 1–27 (MAGL…RSSG) and 46–100 (PAAV…PKAQ). The EAR-like (transcriptional repression) signature appears at 11-15 (LRLGL). Over residues 54–63 (GAQEDKEDAD) the composition is skewed to acidic residues. Residues 122-217 (AALVKVSMDG…SCKRLRIMKG (96 aa)) enclose the PB1 domain.

This sequence belongs to the Aux/IAA family. Homodimers and heterodimers. Highly expressed in etiolated shoots. Expressed in roots.

The protein resides in the nucleus. In terms of biological role, aux/IAA proteins are short-lived transcriptional factors that function as repressors of early auxin response genes at low auxin concentrations. The protein is Auxin-responsive protein IAA11 (IAA11) of Oryza sativa subsp. japonica (Rice).